A 360-amino-acid chain; its full sequence is BOLA class I histocompatibility antigen, alpha chain BL3-6 (360 aa).

The N-terminal stretch at 1–21 is a signal peptide; sequence MGPRALLLLLSGVLILTETRA. Residues 22 to 111 form an alpha-1 region; sequence GSHSLRYFST…LRGYYNQSEA (90 aa). Over 22 to 308 the chain is Extracellular; that stretch reads GSHSLRYFST…QPSFLTMGII (287 aa). N107 carries an N-linked (GlcNAc...) asparagine glycan. The alpha-2 stretch occupies residues 112–203; it reads GSHTLQWMSG…ENGKDTLLRA (92 aa). Cystine bridges form between C122-C185 and C224-C280. The tract at residues 204 to 295 is alpha-3; that stretch reads DPPKAHVTHH…GLQEPLTLRW (92 aa). One can recognise an Ig-like C1-type domain in the interval 206 to 292; that stretch reads PKAHVTHHPI…QHEGLQEPLT (87 aa). Residues 296-308 are connecting peptide; it reads EPPQPSFLTMGII. The helical transmembrane segment at 309-328 threads the bilayer; it reads VGLVLLVVTGAVVAGVVICM. At 329 to 360 the chain is on the cytoplasmic side; that stretch reads KKRSGEKGGNYIQASSSDSAQGSDVSLTVPKV. The interval 340-360 is disordered; that stretch reads IQASSSDSAQGSDVSLTVPKV. Positions 341-354 are enriched in low complexity; sequence QASSSDSAQGSDVS. S351 and S354 each carry phosphoserine.

It belongs to the MHC class I family. In terms of assembly, heterodimer of an alpha chain and a beta chain (beta-2-microglobulin).

The protein resides in the membrane. Its function is as follows. Involved in the presentation of foreign antigens to the immune system. The polypeptide is BOLA class I histocompatibility antigen, alpha chain BL3-6 (Bos taurus (Bovine)).